Reading from the N-terminus, the 704-residue chain is Elongation factor G (704 aa).

The 284-residue stretch at 8 to 291 (VRYRNIGISA…AVVEYLPSPS (284 aa)) folds into the tr-type G domain. GTP contacts are provided by residues 17–24 (AHIDAGKT), 88–92 (DTPGH), and 142–145 (NKMD).

Belongs to the TRAFAC class translation factor GTPase superfamily. Classic translation factor GTPase family. EF-G/EF-2 subfamily.

It localises to the cytoplasm. In terms of biological role, catalyzes the GTP-dependent ribosomal translocation step during translation elongation. During this step, the ribosome changes from the pre-translocational (PRE) to the post-translocational (POST) state as the newly formed A-site-bound peptidyl-tRNA and P-site-bound deacylated tRNA move to the P and E sites, respectively. Catalyzes the coordinated movement of the two tRNA molecules, the mRNA and conformational changes in the ribosome. This Blochmanniella pennsylvanica (strain BPEN) protein is Elongation factor G.